The following is a 146-amino-acid chain: Large ribosomal subunit protein uL16 (146 aa).

The protein belongs to the universal ribosomal protein uL16 family. As to quaternary structure, part of the 50S ribosomal subunit.

Its function is as follows. Binds 23S rRNA and is also seen to make contacts with the A and possibly P site tRNAs. The protein is Large ribosomal subunit protein uL16 of Thermomicrobium roseum (strain ATCC 27502 / DSM 5159 / P-2).